A 223-amino-acid chain; its full sequence is Deoxyribose-phosphate aldolase 1 (223 aa).

Residue D91 is the Proton donor/acceptor of the active site. The active-site Schiff-base intermediate with acetaldehyde is K153. K182 (proton donor/acceptor) is an active-site residue.

It belongs to the DeoC/FbaB aldolase family. DeoC type 1 subfamily.

The protein resides in the cytoplasm. It catalyses the reaction 2-deoxy-D-ribose 5-phosphate = D-glyceraldehyde 3-phosphate + acetaldehyde. It functions in the pathway carbohydrate degradation; 2-deoxy-D-ribose 1-phosphate degradation; D-glyceraldehyde 3-phosphate and acetaldehyde from 2-deoxy-alpha-D-ribose 1-phosphate: step 2/2. Functionally, catalyzes a reversible aldol reaction between acetaldehyde and D-glyceraldehyde 3-phosphate to generate 2-deoxy-D-ribose 5-phosphate. The chain is Deoxyribose-phosphate aldolase 1 from Yersinia pestis.